We begin with the raw amino-acid sequence, 38 residues long: uncharacterized protein (38 aa).

It belongs to the asfivirus C84L family.

This is an uncharacterized protein from Ornithodoros (relapsing fever ticks).